A 668-amino-acid chain; its full sequence is Spindle assembly abnormal protein 6 homolog (668 aa).

The 53-residue stretch at 39 to 91 folds into the PISA domain; that stretch reads VHKKELVVRLSDDTDPFFLYNLTLGEEDFQSLKNQQGLLVEFSAFPQRFIDLL. The stretch at 182 to 482 forms a coiled coil; the sequence is LGVTQQALAE…NVIAWLNKQL (301 aa). Positions 623–668 are disordered; that stretch reads GSVPVKGQRNGSSAGTVPVRPALPKSGSSPILSAYFPGQQSRLPAS.

Nine homodimers form a cartwheel structure with an internal diameter of 23 nM and radial spokes connecting to the microtubule triplets.

The protein localises to the cytoplasm. The protein resides in the cytoskeleton. Its subcellular location is the microtubule organizing center. It is found in the centrosome. In terms of biological role, central scaffolding component of the centrioles ensuring their 9-fold symmetry. Required for centrosome biogenesis and duplication: required both for mother-centriole-dependent centriole duplication and deuterosome-dependent centriole amplification in multiciliated cells. This is Spindle assembly abnormal protein 6 homolog (sas6) from Xenopus laevis (African clawed frog).